We begin with the raw amino-acid sequence, 270 residues long: Phthiotriol/phenolphthiotriol dimycocerosates methyltransferase (270 aa).

This sequence belongs to the methyltransferase superfamily. Phthiotriol/phenolphthiotriol dimycocerosates methyltransferase family.

In terms of biological role, catalyzes the methylation of the lipid moiety of the intermediate compounds phthiotriol and glycosylated phenolphthiotriol dimycoserosates to form phthiocerol dimycocerosates (DIM A) and glycosylated phenolphthiocerol dimycocerosates (PGL). The chain is Phthiotriol/phenolphthiotriol dimycocerosates methyltransferase from Mycobacterium bovis (strain ATCC BAA-935 / AF2122/97).